We begin with the raw amino-acid sequence, 230 residues long: Secretory carrier-associated membrane protein 4 (230 aa).

At Met-1 to Arg-39 the chain is on the cytoplasmic side. 4 helical membrane passes run Ile-40–Ala-60, Trp-61–Phe-81, Phe-105–Gly-125, and Val-149–Ile-169. Residues Met-170–Pro-230 lie on the Cytoplasmic side of the membrane. Phosphothreonine is present on Thr-194. Residues Phe-208–Pro-230 form a disordered region.

Belongs to the SCAMP family.

Its subcellular location is the membrane. Functionally, probably involved in membrane protein trafficking. In Bos taurus (Bovine), this protein is Secretory carrier-associated membrane protein 4 (SCAMP4).